The sequence spans 294 residues: UDP-3-O-acyl-N-acetylglucosamine deacetylase (294 aa).

Residues histidine 75, histidine 232, and aspartate 236 each coordinate Zn(2+). The Proton donor role is filled by histidine 259.

The protein belongs to the LpxC family. The cofactor is Zn(2+).

The catalysed reaction is a UDP-3-O-[(3R)-3-hydroxyacyl]-N-acetyl-alpha-D-glucosamine + H2O = a UDP-3-O-[(3R)-3-hydroxyacyl]-alpha-D-glucosamine + acetate. It functions in the pathway glycolipid biosynthesis; lipid IV(A) biosynthesis; lipid IV(A) from (3R)-3-hydroxytetradecanoyl-[acyl-carrier-protein] and UDP-N-acetyl-alpha-D-glucosamine: step 2/6. Catalyzes the hydrolysis of UDP-3-O-myristoyl-N-acetylglucosamine to form UDP-3-O-myristoylglucosamine and acetate, the committed step in lipid A biosynthesis. This chain is UDP-3-O-acyl-N-acetylglucosamine deacetylase, found in Campylobacter jejuni subsp. jejuni serotype O:2 (strain ATCC 700819 / NCTC 11168).